Consider the following 72-residue polypeptide: Keratin-associated protein 19-5 (72 aa).

Belongs to the KRTAP type 19 family. As to quaternary structure, interacts with hair keratins.

Its function is as follows. In the hair cortex, hair keratin intermediate filaments are embedded in an interfilamentous matrix, consisting of hair keratin-associated proteins (KRTAP), which are essential for the formation of a rigid and resistant hair shaft through their extensive disulfide bond cross-linking with abundant cysteine residues of hair keratins. The matrix proteins include the high-sulfur and high-glycine-tyrosine keratins. The protein is Keratin-associated protein 19-5 (KRTAP19-5) of Homo sapiens (Human).